The primary structure comprises 502 residues: Adenylate cyclase (502 aa).

Residues 1–25 (MGDFCRRVDCKAMKFFALRSSIRTQ) are Cytoplasmic-facing. A helical transmembrane segment spans residues 26 to 46 (IMASTTLLILALIGAIVTVWA). Residues 47 to 203 (KSESTLYHQE…RKVNLAVTNA (157 aa)) lie on the Lumenal, thylakoid side of the membrane. A helical transmembrane segment spans residues 204–226 (VNQALVVGFAGLNIGWICAYFLA). An HAMP domain is found at 227–280 (QHLSDPVRRLQISVAKIAGGDLQHRADIHSRADEIGALATSVNEMSAALQISFN). Residues 227-502 (QHLSDPVRRL…EAISIYEVKA (276 aa)) lie on the Cytoplasmic side of the membrane. One can recognise a Guanylate cyclase domain in the interval 320 to 451 (TILFCDIRGY…DAVNVASRIE (132 aa)). Residues Asp-325 and Asp-369 each contribute to the Mg(2+) site.

Belongs to the adenylyl cyclase class-3 family. It depends on Mg(2+) as a cofactor.

The protein localises to the cellular thylakoid membrane. It carries out the reaction ATP = 3',5'-cyclic AMP + diphosphate. Functionally, may function as a membrane-localized receptor protein. The polypeptide is Adenylate cyclase (cya) (Anabaena cylindrica).